The primary structure comprises 127 residues: NADPH-dependent 7-cyano-7-deazaguanine reductase (127 aa).

The active-site Thioimide intermediate is Cys-40. The Proton donor role is filled by Asp-47. Substrate-binding positions include 62 to 64 and 81 to 82; these read VEL and HE.

This sequence belongs to the GTP cyclohydrolase I family. QueF type 1 subfamily.

It is found in the cytoplasm. It catalyses the reaction 7-aminomethyl-7-carbaguanine + 2 NADP(+) = 7-cyano-7-deazaguanine + 2 NADPH + 3 H(+). Its pathway is tRNA modification; tRNA-queuosine biosynthesis. Its function is as follows. Catalyzes the NADPH-dependent reduction of 7-cyano-7-deazaguanine (preQ0) to 7-aminomethyl-7-deazaguanine (preQ1). The sequence is that of NADPH-dependent 7-cyano-7-deazaguanine reductase from Campylobacter jejuni subsp. jejuni serotype O:6 (strain 81116 / NCTC 11828).